The chain runs to 146 residues: Ribonuclease H (146 aa).

The RNase H type-1 domain occupies 4–145 (ELNKVVVYTD…ADMLARSQIV (142 aa)). Asp13, Glu51, Asp73, and Asp137 together coordinate Mg(2+).

Belongs to the RNase H family. As to quaternary structure, monomer. Mg(2+) serves as cofactor.

The protein resides in the cytoplasm. The catalysed reaction is Endonucleolytic cleavage to 5'-phosphomonoester.. Its function is as follows. Endonuclease that specifically degrades the RNA of RNA-DNA hybrids. This Ehrlichia ruminantium (strain Gardel) protein is Ribonuclease H.